Here is a 939-residue protein sequence, read N- to C-terminus: Valine--tRNA ligase (939 aa).

The short motif at 47 to 57 (PNVTGILHMGH) is the 'HIGH' region element. A 'KMSKS' region motif is present at residues 563 to 567 (KLSKS). Lys566 is an ATP binding site. Residues 874-939 (EHLAKERVRL…QSILDKLASL (66 aa)) adopt a coiled-coil conformation.

It belongs to the class-I aminoacyl-tRNA synthetase family. ValS type 1 subfamily. As to quaternary structure, monomer.

It localises to the cytoplasm. The enzyme catalyses tRNA(Val) + L-valine + ATP = L-valyl-tRNA(Val) + AMP + diphosphate. Its function is as follows. Catalyzes the attachment of valine to tRNA(Val). As ValRS can inadvertently accommodate and process structurally similar amino acids such as threonine, to avoid such errors, it has a 'posttransfer' editing activity that hydrolyzes mischarged Thr-tRNA(Val) in a tRNA-dependent manner. The protein is Valine--tRNA ligase of Chlamydia trachomatis serovar L2 (strain ATCC VR-902B / DSM 19102 / 434/Bu).